The primary structure comprises 131 residues: Holo-[acyl-carrier-protein] synthase (131 aa).

Residues Asp-8 and Glu-59 each contribute to the Mg(2+) site.

It belongs to the P-Pant transferase superfamily. AcpS family. Mg(2+) serves as cofactor.

It localises to the cytoplasm. The catalysed reaction is apo-[ACP] + CoA = holo-[ACP] + adenosine 3',5'-bisphosphate + H(+). Functionally, transfers the 4'-phosphopantetheine moiety from coenzyme A to a Ser of acyl-carrier-protein. This Rickettsia africae (strain ESF-5) protein is Holo-[acyl-carrier-protein] synthase.